A 269-amino-acid chain; its full sequence is Enoyl-[acyl-carrier-protein] reductase [NADH] (269 aa).

Residues 20–21 (SI), 64–65 (DV), and 95–96 (IG) each bind NAD(+). Tyrosine 158 serves as a coordination point for substrate. Positions 165 and 194 each coordinate NAD(+).

It belongs to the short-chain dehydrogenases/reductases (SDR) family. FabI subfamily. In terms of assembly, homodimer. Homotetramer.

The enzyme catalyses a 2,3-saturated acyl-[ACP] + NAD(+) = a (2E)-enoyl-[ACP] + NADH + H(+). It catalyses the reaction a 2,3-saturated acyl-CoA + NAD(+) = a (2E)-enoyl-CoA + NADH + H(+). Its pathway is lipid metabolism; mycolic acid biosynthesis. In terms of biological role, enoyl-ACP reductase of the type II fatty acid syntase (FAS-II) system, which is involved in the biosynthesis of mycolic acids, a major component of mycobacterial cell walls. Catalyzes the NADH-dependent reduction of the double bond of 2-trans-enoyl-[acyl-carrier protein], an essential step in the fatty acid elongation cycle of the FAS-II pathway. Shows preference for long-chain fatty acyl thioester substrates, and can also use 2-trans-enoyl-CoAs as alternative substrates. The mycobacterial FAS-II system utilizes the products of the FAS-I system as primers to extend fatty acyl chain lengths up to C56, forming the meromycolate chain that serves as the precursor for final mycolic acids. Is the primary target of the first-line antitubercular drug isoniazid (INH) and of the second-line drug ethionamide (ETH). Overexpressed inhA confers INH and ETH resistance to M.bovis. The mechanism of isoniazid action against InhA is covalent attachment of the activated form of the drug to the nicotinamide ring of NAD and binding of the INH-NAD adduct to the active site of InhA. Similarly, the ETH-NAD adduct binds InhA. This Mycobacterium bovis (strain ATCC BAA-935 / AF2122/97) protein is Enoyl-[acyl-carrier-protein] reductase [NADH].